The chain runs to 277 residues: Sarcosine/dimethylglycine N-methyltransferase (277 aa).

It belongs to the methyltransferase superfamily. In terms of assembly, monomer.

The enzyme catalyses sarcosine + 2 S-adenosyl-L-methionine = glycine betaine + 2 S-adenosyl-L-homocysteine + 2 H(+). It catalyses the reaction sarcosine + S-adenosyl-L-methionine = N,N-dimethylglycine + S-adenosyl-L-homocysteine + H(+). It carries out the reaction N,N-dimethylglycine + S-adenosyl-L-methionine = glycine betaine + S-adenosyl-L-homocysteine + H(+). Its pathway is amine and polyamine biosynthesis; betaine biosynthesis via glycine pathway; betaine from glycine: step 2/3. It participates in amine and polyamine biosynthesis; betaine biosynthesis via glycine pathway; betaine from glycine: step 3/3. Its activity is regulated as follows. Inhibited by n-butylic acid and S-adenosyl-L-homocysteine. Its function is as follows. Catalyzes the methylation of sarcosine and dimethylglycine to dimethylglycine and betaine, respectively, with S-adenosylmethionine (AdoMet) acting as the methyl donor. Activity with sarcosine is much weaker than activity with dimethylglycine. This chain is Sarcosine/dimethylglycine N-methyltransferase, found in Aphanothece halophytica.